The following is a 306-amino-acid chain: uncharacterized protein (306 aa).

9 helical membrane passes run 6 to 26, 37 to 57, 67 to 87, 91 to 111, 125 to 145, 148 to 168, 177 to 197, 213 to 233, and 251 to 271; these read VQIMISHSLMIGLWASAFPGI, HLALFRLLIGSMALLLFAVLT, IPAIFLLGFLGFAFYHILLNI, TVSAGVASLLVTTAPIFSAML, WLGSMISLLGVLLIAFGAGDF, SMSGILVILLAAFSESIYFVF, GFIPFVTFTIWGGTIPMLVFL, LSIVYLGLLPTVIPYFALAYV, and ALALIISWLWIGEIPTLLSLL. EamA domains lie at 17-140 and 160-285; these read GLWA…LIAF and FSES…FTYL.

Belongs to the EamA transporter family.

The protein resides in the cell membrane. This is an uncharacterized protein from Bacillus subtilis (strain 168).